The primary structure comprises 294 residues: Urease accessory protein UreD (294 aa).

A disordered region spans residues 1–22 (MSVEKPVAAGRQNSKATGRHKG).

The protein belongs to the UreD family. As to quaternary structure, ureD, UreF and UreG form a complex that acts as a GTP-hydrolysis-dependent molecular chaperone, activating the urease apoprotein by helping to assemble the nickel containing metallocenter of UreC. The UreE protein probably delivers the nickel.

The protein resides in the cytoplasm. In terms of biological role, required for maturation of urease via the functional incorporation of the urease nickel metallocenter. This Alcanivorax borkumensis (strain ATCC 700651 / DSM 11573 / NCIMB 13689 / SK2) protein is Urease accessory protein UreD.